The sequence spans 126 residues: Small ribosomal subunit protein eS6 (126 aa).

Belongs to the eukaryotic ribosomal protein eS6 family.

The sequence is that of Small ribosomal subunit protein eS6 from Nanoarchaeum equitans (strain Kin4-M).